We begin with the raw amino-acid sequence, 80 residues long: Acyl carrier protein (80 aa).

Positions 4-79 constitute a Carrier domain; the sequence is EAILEKVRSI…DAVKYIEDKQ (76 aa). Residue Ser-39 is modified to O-(pantetheine 4'-phosphoryl)serine.

The protein belongs to the acyl carrier protein (ACP) family. 4'-phosphopantetheine is transferred from CoA to a specific serine of apo-ACP by AcpS. This modification is essential for activity because fatty acids are bound in thioester linkage to the sulfhydryl of the prosthetic group.

It is found in the cytoplasm. Its pathway is lipid metabolism; fatty acid biosynthesis. Its function is as follows. Carrier of the growing fatty acid chain in fatty acid biosynthesis. The polypeptide is Acyl carrier protein (Prochlorococcus marinus (strain SARG / CCMP1375 / SS120)).